We begin with the raw amino-acid sequence, 510 residues long: D-alanine--D-alanyl carrier protein ligase (510 aa).

157 to 158 (TS) contacts ATP. Residue D202 coordinates D-alanine. 297–302 (NTYGPT) serves as a coordination point for ATP. A D-alanine-binding site is contributed by V306. The ATP site is built by D389 and K498. Residue K498 coordinates D-alanine.

It belongs to the ATP-dependent AMP-binding enzyme family. DltA subfamily.

The protein resides in the cytoplasm. It carries out the reaction holo-[D-alanyl-carrier protein] + D-alanine + ATP = D-alanyl-[D-alanyl-carrier protein] + AMP + diphosphate. It functions in the pathway cell wall biogenesis; lipoteichoic acid biosynthesis. In terms of biological role, catalyzes the first step in the D-alanylation of lipoteichoic acid (LTA), the activation of D-alanine and its transfer onto the D-alanyl carrier protein (Dcp) DltC. In an ATP-dependent two-step reaction, forms a high energy D-alanyl-AMP intermediate, followed by transfer of the D-alanyl residue as a thiol ester to the phosphopantheinyl prosthetic group of the Dcp. D-alanylation of LTA plays an important role in modulating the properties of the cell wall in Gram-positive bacteria, influencing the net charge of the cell wall. The chain is D-alanine--D-alanyl carrier protein ligase from Listeria monocytogenes serotype 4b (strain F2365).